Consider the following 327-residue polypeptide: MALADSARGLPNGGGGGGGSGSSSSSAEPPLFPDIVELNVGGQVYVTRRCTVVSVPDSLLWRMFTQQQPQELARDSKGRFFLDRDGFFFRYILDYLRDLQLVLPDYFPERSRLQREAEYFELPELVRRLGAPQQPGPGPPPPHSRRGVHKEGSLGDELLPLGYAEPEPQEGASAGAPSPTLELASRSPSGGAAGPLLTPSQSLDGSRRSGYITIGYRGSYTIGRDAQADAKFRRVARITVCGKTSLAKEVFGDTLNESRDPDRPPERYTSRYYLKFNFLEQAFDKLSESGFHMVACSSTGTCAFASSTDQSEDKIWTSYTEYVFCRE.

Residues 1–28 (MALADSARGLPNGGGGGGGSGSSSSSAE) form a disordered region. Ala-2 carries the post-translational modification N-acetylalanine. The segment covering 11 to 21 (PNGGGGGGGSG) has biased composition (gly residues). Position 119 is a phosphotyrosine (Tyr-119). Residues 129–204 (LGAPQQPGPG…PLLTPSQSLD (76 aa)) are disordered. 3 positions are modified to phosphoserine: Ser-153, Ser-173, and Ser-187. Residue Thr-198 is modified to Phosphothreonine. The residue at position 202 (Ser-202) is a Phosphoserine.

Interacts as a tetramer with GABBR1 and GABBR2. Expressed in the brain, mainly in the hippocampus and cerebellum.

It is found in the presynaptic cell membrane. The protein localises to the postsynaptic cell membrane. Auxiliary subunit of GABA-B receptors that determine the pharmacology and kinetics of the receptor response. Increases agonist potency and markedly alter the G-protein signaling of the receptors by accelerating onset and promoting desensitization. This is BTB/POZ domain-containing protein KCTD12 (Kctd12) from Mus musculus (Mouse).